Consider the following 378-residue polypeptide: MAVDLLSIYGPGLFESLLTVKGATGLIAALILGYIIITRLPGQKTKPKLLDLTAGGIPFEKVGEVFNDYDKSYGKGTHGELHVQDTNKVFQLANTFYDFVTDGYEWAWGSSFHFSQRMPGLSHAASQMLHESRMASYLRLKPGMTCLDVGCGVGNPGRTVAACSGAVVTGITINKYQIQRAEYHNRRTGLVGFFKPTVGNFCNMPFDAKSFDAAFAMDATCHAPKLEDVYGEVFRVLKPGGFFATYEWVSTKNYDPTNTRHVKVMNSIIFGNGLPNIRSWKQAEEAGENVGFKLLTSFDLATAPPVGKPWYYVPELMVKYGLLKIQKALVRGACSLGLLPDQSWKVCNMVADMVPNLVEGGATDIFTPMHLLIFQKPE.

Residues 17–37 (LLTVKGATGLIAALILGYIII) form a helical membrane-spanning segment.

It belongs to the class I-like SAM-binding methyltransferase superfamily. Erg6/SMT family.

Its subcellular location is the microsome membrane. It catalyses the reaction squalene + 2 S-adenosyl-L-methionine = 3,22-dimethyl-1,2,23,24-tetradehydro-2,3,22,23-tetrahydrosqualene + 2 S-adenosyl-L-homocysteine + 2 H(+). Functionally, converts squalene to mono- and dimethyl derivatives, but not to tri- and tetramethylated products. Unable to methylate cycloartenol, zymosterol or lanosterol. Methylates both C-3 and C22 positions, but only C-3 position in monomethylated products. Produces mainly monomethylated squalene and only 20% of dimethylated squalene. The chain is Squalene methyltransferase 2 (TMT-2) from Botryococcus braunii (Green alga).